A 235-amino-acid chain; its full sequence is Protein RESISTANCE TO PHYTOPHTHORA 1, chloroplastic (235 aa).

A chloroplast-targeting transit peptide spans 1–43 (MNSATTMSASVLNYQILKFFPPQKNGFLKSPLIRGKICRFCVS). The span at 53–66 (VIEDPKEETQEKSD) shows a compositional bias: basic and acidic residues. The disordered stretch occupies residues 53-92 (VIEDPKEETQEKSDGVIVNSTEEEEERSGENSTSTGPSTV). A run of 4 helical transmembrane segments spans residues 131–151 (FEVQAYASMLIGGALSFNLIF), 158–178 (IWRLMGMWSIWMFTIPSLRAR), 188–208 (LNYLFLLVPLLNVAIPFFLKS), and 211–231 (VVWSADTVAFLGMYAWKLGWL).

It localises to the plastid. The protein localises to the chloroplast. The protein resides in the membrane. Plays a positive role in the immune response to the oomycetes P.infestans, including induced oxidative burst and enhanced expression of defense-related genes. This is Protein RESISTANCE TO PHYTOPHTHORA 1, chloroplastic from Solanum tuberosum (Potato).